The sequence spans 78 residues: Defensin SD2 (78 aa).

The N-terminal stretch at 1–20 (MKSSMKMFAALLLVVMCLLA) is a signal peptide. 4 disulfides stabilise this stretch: Cys-34–Cys-78, Cys-45–Cys-65, Cys-51–Cys-72, and Cys-55–Cys-74.

It belongs to the DEFL family. In terms of tissue distribution, highest expression in flowers and to a lesser extent in leaves. Lower levels in hypocotyls. No expression in roots and cotyledons.

Its subcellular location is the secreted. It localises to the cell wall. May play a protective role in flowers by protecting the reproductive organs from potential pathogen attack. This Helianthus annuus (Common sunflower) protein is Defensin SD2 (SD2).